The chain runs to 149 residues: MKTFTPKPADLTHDWYVIDATDVVLGRLATQAAILLRGKNKPTYAPHADSGNHVIIINADKIALTGNKMGKELYSHSGRPGGLRRDSYAELLEKNPERIIKNAVKGMLPKNRLAKVQLDRLRIFRGAEHPHTPQKPQVFEIAQVSQQAK.

The protein belongs to the universal ribosomal protein uL13 family. As to quaternary structure, part of the 50S ribosomal subunit.

This protein is one of the early assembly proteins of the 50S ribosomal subunit, although it is not seen to bind rRNA by itself. It is important during the early stages of 50S assembly. The polypeptide is Large ribosomal subunit protein uL13 (Bifidobacterium longum (strain DJO10A)).